The chain runs to 880 residues: Alanine--tRNA ligase (880 aa).

Zn(2+) contacts are provided by histidine 566, histidine 570, cysteine 668, and histidine 672.

It belongs to the class-II aminoacyl-tRNA synthetase family. Zn(2+) is required as a cofactor.

It localises to the cytoplasm. The catalysed reaction is tRNA(Ala) + L-alanine + ATP = L-alanyl-tRNA(Ala) + AMP + diphosphate. In terms of biological role, catalyzes the attachment of alanine to tRNA(Ala) in a two-step reaction: alanine is first activated by ATP to form Ala-AMP and then transferred to the acceptor end of tRNA(Ala). Also edits incorrectly charged Ser-tRNA(Ala) and Gly-tRNA(Ala) via its editing domain. The sequence is that of Alanine--tRNA ligase from Parafrankia sp. (strain EAN1pec).